We begin with the raw amino-acid sequence, 463 residues long: D(2)-like dopamine receptor (463 aa).

At 1 to 35 the chain is on the extracellular side; it reads MDVFTQYAYNDSIFDNGTWSANETTKDETHPYNYY. Residues N10, N16, and N22 are each glycosylated (N-linked (GlcNAc...) asparagine). Residues 36–58 form a helical membrane-spanning segment; that stretch reads AMLLTLLIFVIVFGNVLVCMAVS. Residues 59–68 lie on the Cytoplasmic side of the membrane; it reads REKALQTTTN. Residues 69-91 traverse the membrane as a helical segment; it reads YLIVSLAVADLLVATLVMPWVVY. Over 92-106 the chain is Extracellular; sequence LEVVGEWRFSKIHCD. C105 and C183 are joined by a disulfide. Residues 107–128 form a helical membrane-spanning segment; it reads IFVTLDVMMCTASILNLCAISI. Over 129–149 the chain is Cytoplasmic; the sequence is DRYTAVAMPMLYNTRYSSRRR. The helical transmembrane segment at 150–170 threads the bilayer; that stretch reads VTVMISVVWVLSFAISCPLLF. The Extracellular segment spans residues 171 to 189; that stretch reads GLNNTATRDQSLCFIANPA. The helical transmembrane segment at 190–214 threads the bilayer; sequence FVVYSSIVSFYVPFIVTLLVYVQIY. At 215 to 392 the chain is on the cytoplasmic side; that stretch reads VVLRKRRKRV…SQQKEKKATQ (178 aa). A disordered region spans residues 295–362; it reads CGGSHKQPPP…KEAQGNPAPV (68 aa). Polar residues predominate over residues 315 to 329; sequence PATSHQLLMSTKANA. Residues 341–353 show a composition bias toward basic and acidic residues; the sequence is EGQRTEKNGDPTK. A helical transmembrane segment spans residues 393-414; it reads MLAIVLGVFIICWLPFFITHIL. At 415–429 the chain is on the extracellular side; that stretch reads NTHCTRCKVPAEMYN. C418 and C421 are joined by a disulfide. Residues 430-451 traverse the membrane as a helical segment; it reads AFTWLGYVNSAVNPIIYTTFNV. Residues 452–463 are Cytoplasmic-facing; sequence EFRKAFIKILHC.

This sequence belongs to the G-protein coupled receptor 1 family.

It localises to the cell membrane. In terms of biological role, receptor for dopamine. The sequence is that of D(2)-like dopamine receptor (d215) from Takifugu rubripes (Japanese pufferfish).